Here is a 236-residue protein sequence, read N- to C-terminus: Orotidine 5'-phosphate decarboxylase (236 aa).

Residues Asp11, Lys33, Asp60–Thr69, Thr119, Arg181, Gln190, Gly210, and Arg211 contribute to the substrate site. Lys62 functions as the Proton donor in the catalytic mechanism.

It belongs to the OMP decarboxylase family. Type 1 subfamily. As to quaternary structure, homodimer.

The catalysed reaction is orotidine 5'-phosphate + H(+) = UMP + CO2. Its pathway is pyrimidine metabolism; UMP biosynthesis via de novo pathway; UMP from orotate: step 2/2. In terms of biological role, catalyzes the decarboxylation of orotidine 5'-monophosphate (OMP) to uridine 5'-monophosphate (UMP). The polypeptide is Orotidine 5'-phosphate decarboxylase (Cutibacterium acnes (strain DSM 16379 / KPA171202) (Propionibacterium acnes)).